Here is a 582-residue protein sequence, read N- to C-terminus: Aspartate--tRNA ligase (582 aa).

Glu-174 contacts L-aspartate. The interval 198-201 is aspartate; sequence QITK. An L-aspartate-binding site is contributed by Arg-220. ATP contacts are provided by residues 220-222 and Gln-229; that span reads RDE. His-443 is an L-aspartate binding site. Glu-477 provides a ligand contact to ATP. Residue Arg-484 coordinates L-aspartate. 529-532 is an ATP binding site; sequence GLDR.

Belongs to the class-II aminoacyl-tRNA synthetase family. Type 1 subfamily. In terms of assembly, homodimer.

It is found in the cytoplasm. It carries out the reaction tRNA(Asp) + L-aspartate + ATP = L-aspartyl-tRNA(Asp) + AMP + diphosphate. In terms of biological role, catalyzes the attachment of L-aspartate to tRNA(Asp) in a two-step reaction: L-aspartate is first activated by ATP to form Asp-AMP and then transferred to the acceptor end of tRNA(Asp). This chain is Aspartate--tRNA ligase, found in Streptococcus pyogenes serotype M1.